We begin with the raw amino-acid sequence, 89 residues long: MAHKKAGGSSRNGRDSESKRLGVKKFGGEAVIPGNIIVRQRGTKWHAGANVGLGKDHTIFALTTGNVDFRKKANGRVYVSVMPKAEAAE.

The disordered stretch occupies residues 1 to 23 (MAHKKAGGSSRNGRDSESKRLGV).

This sequence belongs to the bacterial ribosomal protein bL27 family.

This Rhizobium meliloti (strain 1021) (Ensifer meliloti) protein is Large ribosomal subunit protein bL27.